Consider the following 504-residue polypeptide: DnaJ homolog subfamily C member 3 (504 aa).

An N-terminal signal peptide occupies residues 1–31; sequence MVAPGSVGSRLGAVFPFLLVLVDLQYEGAEC. TPR repeat units follow at residues 37–70, 72–104, 105–138, 154–187, 188–221, 222–255, 268–301, 306–339, and 340–373; these read VEKH…DPDN, IAYY…KMDF, TAAR…NPSE, MQRL…CVWD, AELR…KSDN, TEAF…DQDH, LNKL…EPSV, VRSK…EPDN, and VNAL…NEND. Cys-248 and Cys-258 are joined by a disulfide. A Phosphoserine modification is found at Ser-274. A disulfide bridge connects residues Cys-313 and Cys-329. Positions 375 to 393 are flexible linker; it reads QIREGLEKAQRLLKQSQKR. One can recognise a J domain in the interval 394–462; sequence DYYKILGVKR…EMRKKFDDGE (69 aa). Positions 451–481 are disordered; the sequence is DPEMRKKFDDGEDPLDAESQQGGGGNPFHRS.

As to quaternary structure, interacts with EIF2AK4/GCN2; this interaction occurs under endoplasmic reticulum (ER) stress, hypothermic and amino acid starving stress conditions and inhibits EIF2AK4/GCN2 kinase activity. Interacts with EIF2AK3. Interacts with EIF2AK2. Forms a trimeric complex with DNAJB1 and HSPA8. Interacts with THAP12. As to expression, widely expressed, with high level in the liver.

It is found in the endoplasmic reticulum. Functionally, involved in the unfolded protein response (UPR) during endoplasmic reticulum (ER) stress. Acts as a negative regulator of the EIF2AK4/GCN2 kinase activity by preventing the phosphorylation of eIF-2-alpha at 'Ser-52' and hence attenuating general protein synthesis under ER stress, hypothermic and amino acid starving stress conditions. Co-chaperone of HSPA8/HSC70, it stimulates its ATPase activity. May inhibit both the autophosphorylation of EIF2AK2/PKR and the ability of EIF2AK2 to catalyze phosphorylation of the EIF2A. May inhibit EIF2AK3/PERK activity. The polypeptide is DnaJ homolog subfamily C member 3 (Dnajc3) (Mus musculus (Mouse)).